A 369-amino-acid polypeptide reads, in one-letter code: Aminomethyltransferase (369 aa).

The protein belongs to the GcvT family. The glycine cleavage system is composed of four proteins: P, T, L and H.

It carries out the reaction N(6)-[(R)-S(8)-aminomethyldihydrolipoyl]-L-lysyl-[protein] + (6S)-5,6,7,8-tetrahydrofolate = N(6)-[(R)-dihydrolipoyl]-L-lysyl-[protein] + (6R)-5,10-methylene-5,6,7,8-tetrahydrofolate + NH4(+). Its function is as follows. The glycine cleavage system catalyzes the degradation of glycine. This Xanthomonas axonopodis pv. citri (strain 306) protein is Aminomethyltransferase.